The following is a 212-amino-acid chain: Abscisic acid receptor PYL10 (212 aa).

The tract at residues 34 to 191 (YAVGPGQCSS…NLQKLKSVSE (158 aa)) is START-like. Abscisate contacts are provided by residues Lys70, 107–112 (ASTSTE), 134–140 (RLRNYRS), and Glu156. Positions 103 to 107 (SGLPA) match the Gate loop motif. The Latch loop signature appears at 133-135 (HRL).

It belongs to the PYR/PYL/RCAR abscisic acid intracellular receptor family. In terms of assembly, homodimer. Interacts with PP2C53. Binding to PP2C53 is dependent on the presence of abscisic acid (ABA). Interacts with PP2C50. Binding to PP2C50 is dependent on the presence of ABA.

Its subcellular location is the cytoplasm. The protein resides in the cytosol. It localises to the nucleus. Inhibits the protein phosphatases PP2C06 and PP2C09 when activated by abscisic acid (ABA). Together with PP2C53, SAPK8 and SAPK10, may form an ABA signaling module involved in stress response. The sequence is that of Abscisic acid receptor PYL10 from Oryza sativa subsp. japonica (Rice).